The sequence spans 250 residues: Putative HTH-type transcriptional regulatory protein PAE1627 (250 aa).

In terms of domain architecture, HTH cro/C1-type spans 129-183; it reads LRAKRQQAGLSLGTLATNLGVTRETVYRYERGEIEAPLKIAEKLINMFGEDITKK. Positions 140 to 159 form a DNA-binding region, H-T-H motif; sequence LGTLATNLGVTRETVYRYER.

The sequence is that of Putative HTH-type transcriptional regulatory protein PAE1627 from Pyrobaculum aerophilum (strain ATCC 51768 / DSM 7523 / JCM 9630 / CIP 104966 / NBRC 100827 / IM2).